A 314-amino-acid polypeptide reads, in one-letter code: Ribonuclease Z (314 aa).

The Zn(2+) site is built by His61, His63, Asp65, His66, His137, Asp207, and His263. Residue Asp65 is the Proton acceptor of the active site.

Belongs to the RNase Z family. Homodimer. It depends on Zn(2+) as a cofactor.

The enzyme catalyses Endonucleolytic cleavage of RNA, removing extra 3' nucleotides from tRNA precursor, generating 3' termini of tRNAs. A 3'-hydroxy group is left at the tRNA terminus and a 5'-phosphoryl group is left at the trailer molecule.. Its function is as follows. Zinc phosphodiesterase, which displays some tRNA 3'-processing endonuclease activity. Probably involved in tRNA maturation, by removing a 3'-trailer from precursor tRNA. The chain is Ribonuclease Z from Thermococcus gammatolerans (strain DSM 15229 / JCM 11827 / EJ3).